The primary structure comprises 282 residues: Homeobox protein Hox-C12 (282 aa).

Disordered regions lie at residues 94-129 (YYREPCAEGGGGGLKREERGRDPGAGPGAALLPLEP) and 147-214 (GGDG…NSRS). Low complexity predominate over residues 162-175 (SCQSLESDSSSSLL). A DNA-binding region (homeobox) is located at residues 214–273 (SRKKRKPYSKLQLAELEGEFLVNEFITRQRRRELSDRLNLSDQQVKIWFQNRRMKKKRLL).

Belongs to the Abd-B homeobox family.

The protein localises to the nucleus. Functionally, sequence-specific transcription factor which is part of a developmental regulatory system that provides cells with specific positional identities on the anterior-posterior axis. The protein is Homeobox protein Hox-C12 (HOXC12) of Homo sapiens (Human).